A 102-amino-acid chain; its full sequence is Citrate lyase acyl carrier protein (102 aa).

At Ser14 the chain carries O-(phosphoribosyl dephospho-coenzyme A)serine.

Belongs to the CitD family. Oligomer with a subunit composition of (alpha,beta,gamma)6.

The protein localises to the cytoplasm. Covalent carrier of the coenzyme of citrate lyase. In Streptococcus equi subsp. equi (strain 4047), this protein is Citrate lyase acyl carrier protein.